We begin with the raw amino-acid sequence, 276 residues long: Light-independent protochlorophyllide reductase iron-sulfur ATP-binding protein (276 aa).

ATP contacts are provided by residues glycine 12–threonine 17 and lysine 41. Serine 16 contacts Mg(2+). [4Fe-4S] cluster is bound by residues cysteine 97 and cysteine 131. Asparagine 182–arginine 183 provides a ligand contact to ATP.

Belongs to the NifH/BchL/ChlL family. Homodimer. Protochlorophyllide reductase is composed of three subunits; BchL, BchN and BchB. It depends on [4Fe-4S] cluster as a cofactor.

The catalysed reaction is chlorophyllide a + oxidized 2[4Fe-4S]-[ferredoxin] + 2 ADP + 2 phosphate = protochlorophyllide a + reduced 2[4Fe-4S]-[ferredoxin] + 2 ATP + 2 H2O. It functions in the pathway porphyrin-containing compound metabolism; bacteriochlorophyll biosynthesis (light-independent). In terms of biological role, component of the dark-operative protochlorophyllide reductase (DPOR) that uses Mg-ATP and reduced ferredoxin to reduce ring D of protochlorophyllide (Pchlide) to form chlorophyllide a (Chlide). This reaction is light-independent. The L component serves as a unique electron donor to the NB-component of the complex, and binds Mg-ATP. The sequence is that of Light-independent protochlorophyllide reductase iron-sulfur ATP-binding protein from Chlorobium luteolum (strain DSM 273 / BCRC 81028 / 2530) (Pelodictyon luteolum).